We begin with the raw amino-acid sequence, 962 residues long: Probable transport protein MmpL9 (962 aa).

A run of 12 helical transmembrane segments spans residues 25–45, 201–223, 225–247, 256–276, 302–322, 335–355, 383–403, 768–788, 796–816, 820–840, 867–887, and 895–915; these read LAAIPILLCWLGFTVFVSVAV, LITGLTFAVITVLLLLVYRSIAT, LLILPMVFIGLGATRGTIAFLGY, FVVNILTALAIAAGTDYAIFL, ANVILGSGLTIAGATYCLSFA, AIGMLVSVAAALTLAPAIIAI, WPGPILATSVALALVGLLALP, YDILIVGIAAVCLVFIVMLMI, LVIVGTVLLSLGTAFGLSVLI, FVGLQVHWTIVAMSVIVLLAV, AMAGTGAVVTSAGLVFAFTMA, and RVIGQVGTTIGLGLLFDTLVV.

Belongs to the resistance-nodulation-cell division (RND) (TC 2.A.6) family. MmpL subfamily.

Its subcellular location is the cell membrane. This Mycobacterium tuberculosis (strain ATCC 25618 / H37Rv) protein is Probable transport protein MmpL9 (mmpL9).